The sequence spans 378 residues: Alkaline elastase YaB (378 aa).

The signal sequence occupies residues methionine 1–alanine 27. A propeptide spanning residues alanine 28–methionine 110 is cleaved from the precursor. Glutamine 111 contacts Ca(2+). The Peptidase S8 domain maps to proline 114–threonine 377. Aspartate 141 serves as the catalytic Charge relay system. Aspartate 149 lines the Ca(2+) pocket. Histidine 171 serves as the catalytic Charge relay system. Ca(2+) contacts are provided by leucine 182, asparagine 184, isoleucine 186, valine 188, alanine 272, tyrosine 274, and alanine 277. Residue serine 324 is the Charge relay system of the active site.

It belongs to the peptidase S8 family. Ca(2+) is required as a cofactor.

It is found in the secreted. Functionally, digests elastin efficiently, has a substrate preference for Ala in P1 position. The sequence is that of Alkaline elastase YaB (ale) from Bacillus sp. (strain YaB).